We begin with the raw amino-acid sequence, 249 residues long: UPF0758 protein Oant_1909 (249 aa).

The MPN domain maps to 127–249 (VLGSWNKVIE…HASFRGLGLI (123 aa)). His198, His200, and Asp211 together coordinate Zn(2+). The JAMM motif signature appears at 198 to 211 (HNHPSGDPTPSRAD).

Belongs to the UPF0758 family.

This Brucella anthropi (strain ATCC 49188 / DSM 6882 / CCUG 24695 / JCM 21032 / LMG 3331 / NBRC 15819 / NCTC 12168 / Alc 37) (Ochrobactrum anthropi) protein is UPF0758 protein Oant_1909.